The following is a 52-amino-acid chain: Gastrin/cholecystokinin-like peptide (52 aa).

It belongs to the gastrin/cholecystokinin family.

The protein resides in the secreted. Its function is as follows. May control digestion processes. In Trachemys scripta (Red-eared slider turtle), this protein is Gastrin/cholecystokinin-like peptide.